Consider the following 82-residue polypeptide: Leucinostatins biosynthesis cluster protein M (82 aa).

The disordered stretch occupies residues 34-82 (ARNETHDPSGPRAPVSSMRLGPRSRPYHHGTARLRGSPNCSRDSSSAAT). Positions 71–82 (PNCSRDSSSAAT) are enriched in polar residues.

Its function is as follows. Part of the gene cluster that mediates the biosynthesis of the lipopeptide antibiotics leucinostatins that show extensive biological activities, including antimalarial, antiviral, antibacterial, antifungal, and antitumor activities, as well as phytotoxic. The function of lcsM within the leucinostatins biosynthesis has not been identified yet. The chain is Leucinostatins biosynthesis cluster protein M from Purpureocillium lilacinum (Paecilomyces lilacinus).